Here is a 356-residue protein sequence, read N- to C-terminus: Phosphoserine aminotransferase (356 aa).

R41 contributes to the L-glutamate binding site. Pyridoxal 5'-phosphate is bound by residues 75-76 (AS), W99, T147, D166, and Q189. K190 is modified (N6-(pyridoxal phosphate)lysine). 231-232 (NT) contacts pyridoxal 5'-phosphate.

Belongs to the class-V pyridoxal-phosphate-dependent aminotransferase family. SerC subfamily. Homodimer. The cofactor is pyridoxal 5'-phosphate.

The protein localises to the cytoplasm. The catalysed reaction is O-phospho-L-serine + 2-oxoglutarate = 3-phosphooxypyruvate + L-glutamate. The enzyme catalyses 4-(phosphooxy)-L-threonine + 2-oxoglutarate = (R)-3-hydroxy-2-oxo-4-phosphooxybutanoate + L-glutamate. Its pathway is amino-acid biosynthesis; L-serine biosynthesis; L-serine from 3-phospho-D-glycerate: step 2/3. It functions in the pathway cofactor biosynthesis; pyridoxine 5'-phosphate biosynthesis; pyridoxine 5'-phosphate from D-erythrose 4-phosphate: step 3/5. Its function is as follows. Catalyzes the reversible conversion of 3-phosphohydroxypyruvate to phosphoserine and of 3-hydroxy-2-oxo-4-phosphonooxybutanoate to phosphohydroxythreonine. The protein is Phosphoserine aminotransferase of Phocaeicola vulgatus (strain ATCC 8482 / DSM 1447 / JCM 5826 / CCUG 4940 / NBRC 14291 / NCTC 11154) (Bacteroides vulgatus).